A 325-amino-acid chain; its full sequence is Protein UL76 (325 aa).

The disordered stretch occupies residues 222–286 (ARASAVAGGR…VRGGGAVEPA (65 aa)). Over residues 247-258 (GPGAQTVSASGA) the composition is skewed to low complexity.

The protein belongs to the herpesviridae UL24 family.

The protein localises to the virion. The protein resides in the host cytoplasm. Its subcellular location is the host nucleus. It is found in the host nucleolus. It localises to the host Golgi apparatus. Functionally, may participate in nuclear egress of viral particles. Plays a role in the dispersal of several host nucleolar proteins including NCL/nucleolin and NPM1. Since deletion of host NCL/nucleolin negatively impact on nuclear egress, UL76 supposedly acts on this process through its effect on host nucleoli. Induces cell cycle arrest in host cells at the G2/M phase following by apoptosis. The mechanism involves the inhibition of host mitotic complex cyclinB/CDK1. This is Protein UL76 (UL76) from Human cytomegalovirus (strain Merlin) (HHV-5).